Consider the following 186-residue polypeptide: Homeobox expressed in ES cells 1 (186 aa).

A DNA-binding region (homeobox) is located at residues 109–168 (GRRPRTAFTRSQIEILENVFRVNSYPGIDIREELAGKLALDEDRIQIWFQNRRAKLKRSH).

This sequence belongs to the ANF homeobox family. As to quaternary structure, interacts (via N-terminus) with zyx.

Its subcellular location is the nucleus. Its function is as follows. Regulates the earliest stages of development of the anterior neural plate. Plays a role in forebrain development by inhibiting the expression of otx2 and pax6 in the rostral region of the anterior neural plate. Necessary for both neural differentiation and neural patterning. Controls Spemann organizer development. May act as a transcriptional repressor. The polypeptide is Homeobox expressed in ES cells 1 (Xenopus tropicalis (Western clawed frog)).